Here is a 351-residue protein sequence, read N- to C-terminus: Heat-inducible transcription repressor HrcA (351 aa).

It belongs to the HrcA family.

Functionally, negative regulator of class I heat shock genes (grpE-dnaK-dnaJ and groELS operons). Prevents heat-shock induction of these operons. This chain is Heat-inducible transcription repressor HrcA, found in Beutenbergia cavernae (strain ATCC BAA-8 / DSM 12333 / CCUG 43141 / JCM 11478 / NBRC 16432 / NCIMB 13614 / HKI 0122).